The primary structure comprises 1780 residues: MSLRHRTVPPQTGRPLAAEAVGIEEEPYNIIPVNNLLADHPSLRFPEVRAAAAALKTVGDLRRPPYVQWRSHYDLLDWLALFFGFQKDNVRNQREHMVLHLANAQMRLSPPPDNIDSLDSAVVRRFRRKLLANYSSWCSYLGKKSNIWISDRNPDSRRELLYVGLYLLIWGEAANLRFMPECICYIFHNMASELNKILEDCLDENTGQPYLPSLSGENAFLTGVVKPIYDTIQAEIDESKNGTVAHCKWRNYDDINEYFWTDRCFSKLKWPLDLGSNFFKSRGKSVGKTGFVERRTFFYLYRSFDRLWVMLALFLQAAIIVAWEEKPDTSSVTRQLWNALKARDVQVRLLTVFLTWSGMRLLQAVLDAASQYPLVSRETKRHFFRMLMKVIAAAVWIVAFTVLYTNIWKQKRQDRQWSNAATTKIYQFLYAVGAFLVPEILALALFIIPWMRNFLEETNWKIFFALTWWFQGKSFVGRGLREGLVDNIKYSTFWIFVLATKFTFSYFLQVKPMIKPSKLLWNLKDVDYEWHQFYGDSNRFSVALLWLPVVLIYLMDIQIWYAIYSSIVGAVVGLFDHLGEIRDMGQLRLRFQFFASAIQFNLMPEEQLLNARGFGNKFKDGIHRLKLRYGFGRPFKKLESNQVEANKFALIWNEIILAFREEDIVSDREVELLELPKNSWDVTVIRWPCFLLCNELLLALSQARELIDAPDKWLWHKICKNEYRRCAVVEAYDSIKHLLLSIIKVDTEEHSIITVFFQIINQSIQSEQFTKTFRVDLLPKIYETLQKLVGLVNDEETDSGRVVNVLQSLYEIATRQFFIEKKTTEQLSNEGLTPRDPASKLLFQNAIRLPDASNEDFYRQVRRLHTILTSRDSMHSVPVNLEARRRIAFFSNSLFMNMPHAPQVEKMMAFSVLTPYYSEEVVYSKEQLRNETEDGISTLYYLQTIYADEWKNFKERMHREGIKTDSELWTTKLRDLRLWASYRGQTLARTVRGMMYYYRALKMLAFLDSASEMDIREGAQELGSVRNLQGELGGQSDGFVSENDRSSLSRASSSVSTLYKGHEYGTALMKFTYVVACQIYGSQKAKKEPQAEEILYLMKQNEALRIAYVDEVPAGRGETDYYSVLVKYDHQLEKEVEIFRVKLPGPVKLGEGKPENQNHAMIFTRGDAVQTIDMNQDSYFEEALKMRNLLQEYNHYHGIRKPTILGVREHIFTGSVSSLAWFMSAQETSFVTLGQRVLANPLKVRMHYGHPDVFDRFWFLSRGGISKASRVINISEDIFAGFNCTLRGGNVTHHEYIQVGKGRDVGLNQISMFEAKVASGNGEQVLSRDVYRLGHRLDFFRMLSFFYTTVGFFFNTMMVILTVYAFLWGRVYLALSGVEKSALADSTDTNAALGVILNQQFIIQLGLFTALPMIVEWSLEEGFLLAIWNFIRMQIQLSAVFYTFSMGTRAHYFGRTILHGGAKYRATGRGFVVEHKGFTENYRLYARSHFVKAIELGLILIVYASHSPIAKDSLIYIAMTITSWFLVISWIMAPFVFNPSGFDWLKTVYDFEDFMNWIWYQGRISTKSEQSWEKWWYEEQDHLRNTGKAGLFVEIILVLRFFFFQYGIVYQLKIANGSTSLFVYLFSWIYIFAIFVLFLVIQYARDKYSAKAHIRYRLVQFLLIVLAILVIVALLEFTHFSFIDIFTSLLAFIPTGWGILLIAQTQRKWLKNYTIFWNAVVSVARMYDILFGILIMVPVAFLSWMPGFQSMQTRILFNEAFSRGLRIMQIVTGKKSKGDV.

The Cytoplasmic segment spans residues 1–302 (MSLRHRTVPP…ERRTFFYLYR (302 aa)). The helical transmembrane segment at 303–323 (SFDRLWVMLALFLQAAIIVAW) threads the bilayer. Residues 324-348 (EEKPDTSSVTRQLWNALKARDVQVR) lie on the Extracellular side of the membrane. Residues 349-369 (LLTVFLTWSGMRLLQAVLDAA) form a helical membrane-spanning segment. Topologically, residues 370–386 (SQYPLVSRETKRHFFRM) are cytoplasmic. The helical transmembrane segment at 387-407 (LMKVIAAAVWIVAFTVLYTNI) threads the bilayer. Residues 408 to 427 (WKQKRQDRQWSNAATTKIYQ) are Extracellular-facing. The chain crosses the membrane as a helical span at residues 428 to 448 (FLYAVGAFLVPEILALALFII). Residues 449-489 (PWMRNFLEETNWKIFFALTWWFQGKSFVGRGLREGLVDNIK) are Cytoplasmic-facing. A helical transmembrane segment spans residues 490–510 (YSTFWIFVLATKFTFSYFLQV). Residues 511 to 542 (KPMIKPSKLLWNLKDVDYEWHQFYGDSNRFSV) lie on the Extracellular side of the membrane. A helical membrane pass occupies residues 543–563 (ALLWLPVVLIYLMDIQIWYAI). Residues 564-1348 (YSSIVGAVVG…FFRMLSFFYT (785 aa)) lie on the Cytoplasmic side of the membrane. A helical membrane pass occupies residues 1349–1369 (TVGFFFNTMMVILTVYAFLWG). Topologically, residues 1370–1394 (RVYLALSGVEKSALADSTDTNAALG) are extracellular. A helical transmembrane segment spans residues 1395–1415 (VILNQQFIIQLGLFTALPMIV). The Cytoplasmic portion of the chain corresponds to 1416 to 1421 (EWSLEE). The chain crosses the membrane as a helical span at residues 1422 to 1442 (GFLLAIWNFIRMQIQLSAVFY). Topologically, residues 1443-1489 (TFSMGTRAHYFGRTILHGGAKYRATGRGFVVEHKGFTENYRLYARSH) are extracellular. A helical membrane pass occupies residues 1490 to 1510 (FVKAIELGLILIVYASHSPIA). The Cytoplasmic segment spans residues 1511–1516 (KDSLIY). A helical transmembrane segment spans residues 1517 to 1537 (IAMTITSWFLVISWIMAPFVF). Over 1538–1588 (NPSGFDWLKTVYDFEDFMNWIWYQGRISTKSEQSWEKWWYEEQDHLRNTGK) the chain is Extracellular. A helical transmembrane segment spans residues 1589 to 1609 (AGLFVEIILVLRFFFFQYGIV). Topologically, residues 1610 to 1620 (YQLKIANGSTS) are cytoplasmic. Residues 1621–1641 (LFVYLFSWIYIFAIFVLFLVI) form a helical membrane-spanning segment. Residues 1642 to 1657 (QYARDKYSAKAHIRYR) lie on the Extracellular side of the membrane. Residues 1658 to 1678 (LVQFLLIVLAILVIVALLEFT) traverse the membrane as a helical segment. The Cytoplasmic portion of the chain corresponds to 1679-1681 (HFS). Residues 1682–1702 (FIDIFTSLLAFIPTGWGILLI) form a helical membrane-spanning segment. Residues 1703 to 1728 (AQTQRKWLKNYTIFWNAVVSVARMYD) lie on the Extracellular side of the membrane. Asn-1712 carries N-linked (GlcNAc...) asparagine glycosylation. Residues 1729-1749 (ILFGILIMVPVAFLSWMPGFQ) traverse the membrane as a helical segment. The Cytoplasmic portion of the chain corresponds to 1750-1780 (SMQTRILFNEAFSRGLRIMQIVTGKKSKGDV).

This sequence belongs to the glycosyltransferase 48 family. As to expression, highly expressed in flowers. Expressed at low levels in roots, leaves, stems, cauline leaves and siliques.

It is found in the cell membrane. The enzyme catalyses [(1-&gt;3)-beta-D-glucosyl](n) + UDP-alpha-D-glucose = [(1-&gt;3)-beta-D-glucosyl](n+1) + UDP + H(+). Involved in sporophytic and gametophytic development. Required for normal leaf development. During pollen formation, required for the formation of the callose wall separating the tetraspores of the tetrad (interstitial wall), but not for the callose wall surrounding the pollen mother cells (peripheral wall). Functionally redudant to CALS11 (GSL1). May play a role later in pollen grain maturation. Required for callose formation induced by wounding and pathogen attack. May interfere with salicylic acid-induced signaling pathway during defense response. During plant growth and development, callose is found as a transitory component of the cell plate in dividing cells, is a major component of pollen mother cell walls and pollen tubes, and is found as a structural component of plasmodesmatal canals. This is Callose synthase 12 (CALS12) from Arabidopsis thaliana (Mouse-ear cress).